Consider the following 228-residue polypeptide: F-box protein At5g67140 (228 aa).

Residues 4-51 form the F-box domain; it reads EAAIDRLPLDLLAYIFSLATSFTVLAQASGVCKKWRKAVNQSMARRET.

The sequence is that of F-box protein At5g67140 from Arabidopsis thaliana (Mouse-ear cress).